Here is a 581-residue protein sequence, read N- to C-terminus: Multidrug resistance-like ATP-binding protein MdlA (581 aa).

Residues 18 to 303 (YLGSIILLII…LAWMFNIVER (286 aa)) enclose the ABC transmembrane type-1 domain. 6 helical membrane-spanning segments follow: residues 23–43 (ILLIIIAFLQLLPPKIIGILI), 53–73 (GFEILPWISIILLIAIIVYIL), 127–149 (VVFAAGEGVLTLVDSSVMGISVL), 153–175 (ITQISWLLTIISLIPMPIMAILI), 247–267 (VIYLSVAFSNLLAITAGGWLV), and 280–300 (FIMYLGLMIWPMLALAWMFNI). The ABC transporter domain maps to 337–571 (INIDMFFYPK…KNWYKSMYDH (235 aa)). 369 to 376 (GPTGAGKS) is a binding site for ATP.

This sequence belongs to the ABC transporter superfamily. Drug exporter-2 (TC 3.A.1.117) family.

It is found in the cell membrane. It carries out the reaction ATP + H2O + xenobioticSide 1 = ADP + phosphate + xenobioticSide 2.. This is Multidrug resistance-like ATP-binding protein MdlA (mdlA) from Buchnera aphidicola subsp. Schizaphis graminum (strain Sg).